An 836-amino-acid chain; its full sequence is Spliceosome associated factor 3, U4/U6 recycling protein (836 aa).

HAT repeat units follow at residues 127 to 163 (EDFK…YEMS), 296 to 329 (KLPQ…FERD), 331 to 367 (RPNE…LLRR), 418 to 451 (KNMD…LERQ), and 453 to 486 (GDKE…FERE). The interval 507 to 585 (RAIRPQKKVS…APGSFAVQKA (79 aa)) is disordered. A compositionally biased stretch (basic and acidic residues) spans 540-550 (IVKKVKGDDGG). The segment covering 558–579 (SNAKSSSAVSSSNASSTPAPGS) has biased composition (low complexity). RRM domains lie at 593-668 (RTIF…ANDP) and 683-760 (SKVF…LSNP). Disordered regions lie at residues 757-786 (LSNP…PRKG) and 811-830 (AMDV…DQFR). The segment covering 816–827 (EGTSTSQPLSND) has biased composition (polar residues).

In terms of assembly, forms a complex composed of sart-3, terminal uridylyltransferase usip-1 and U6 snRNA; complex formation is mediated by usip-1 and sart-3 binding to U6 snRNA. Associates with U4 and U6 snRNP complexes, probably by interacting with U4 and U6 snRNAs. As to expression, ubiquitously expressed.

It is found in the nucleus. Its subcellular location is the nucleoplasm. In terms of biological role, U6 snRNP-binding protein that functions as a recycling factor of the splicing machinery. Promotes the initial reassembly of U4 and U6 snRNPs following their ejection from the spliceosome during its maturation. In Caenorhabditis elegans, this protein is Spliceosome associated factor 3, U4/U6 recycling protein.